Consider the following 214-residue polypeptide: Adenylate kinase (214 aa).

Position 10–15 (10–15) interacts with ATP; that stretch reads GVGKGT. Positions 30-59 are NMP; the sequence is STGDILRAAVKELTPMGAKAKGYMDSGALV. AMP contacts are provided by residues Thr31, Arg36, 57–59, 85–88, and Gln92; these read ALV and GFPR. Residues 126-163 are LID; the sequence is GRRACANCGAGYHVDFAPSKVAGVCDACSGQLVQREDD. Arg127 contributes to the ATP binding site. Residues Cys130, Cys133, Cys150, and Cys153 each coordinate Zn(2+). AMP contacts are provided by Arg160 and Arg171. Gly199 is an ATP binding site.

It belongs to the adenylate kinase family. In terms of assembly, monomer.

It localises to the cytoplasm. It carries out the reaction AMP + ATP = 2 ADP. It functions in the pathway purine metabolism; AMP biosynthesis via salvage pathway; AMP from ADP: step 1/1. In terms of biological role, catalyzes the reversible transfer of the terminal phosphate group between ATP and AMP. Plays an important role in cellular energy homeostasis and in adenine nucleotide metabolism. In Citrifermentans bemidjiense (strain ATCC BAA-1014 / DSM 16622 / JCM 12645 / Bem) (Geobacter bemidjiensis), this protein is Adenylate kinase.